The primary structure comprises 109 residues: Nucleoid-associated protein Sama_1311 (109 aa).

It belongs to the YbaB/EbfC family. As to quaternary structure, homodimer.

It is found in the cytoplasm. Its subcellular location is the nucleoid. Binds to DNA and alters its conformation. May be involved in regulation of gene expression, nucleoid organization and DNA protection. The protein is Nucleoid-associated protein Sama_1311 of Shewanella amazonensis (strain ATCC BAA-1098 / SB2B).